Consider the following 295-residue polypeptide: Mediator of RNA polymerase II transcription subunit 27 (295 aa).

This sequence belongs to the Mediator complex subunit 27 family. Component of the Mediator complex.

Its subcellular location is the nucleus. Functionally, component of the Mediator complex, a coactivator involved in the regulated transcription of nearly all RNA polymerase II-dependent genes. Mediator functions as a bridge to convey information from gene-specific regulatory proteins to the basal RNA polymerase II transcription machinery. Mediator is recruited to promoters by direct interactions with regulatory proteins and serves as a scaffold for the assembly of a functional preinitiation complex with RNA polymerase II and the general transcription factors. The sequence is that of Mediator of RNA polymerase II transcription subunit 27 (MED27) from Anopheles gambiae (African malaria mosquito).